A 125-amino-acid polypeptide reads, in one-letter code: Dirigent protein 22 (125 aa).

Asn-8, Asn-30, and Asn-65 each carry an N-linked (GlcNAc...) asparagine glycan.

Belongs to the plant dirigent protein family. Homodimer.

It localises to the secreted. It is found in the extracellular space. The protein resides in the apoplast. Dirigent proteins impart stereoselectivity on the phenoxy radical-coupling reaction, yielding optically active lignans from two molecules of coniferyl alcohol in the biosynthesis of lignans, flavonolignans, and alkaloids and thus plays a central role in plant secondary metabolism. This Arabidopsis thaliana (Mouse-ear cress) protein is Dirigent protein 22 (DIR22).